We begin with the raw amino-acid sequence, 447 residues long: GTPase Der (447 aa).

EngA-type G domains are found at residues 4-165 (KIIT…SIKE) and 180-357 (LQIV…KIWN). GTP is bound by residues 10 to 17 (GRPNVGKS), 57 to 61 (DTPGL), 119 to 122 (NKCE), 186 to 193 (GRPNAGKS), 233 to 237 (DTAGL), and 298 to 301 (NKWD). Residues 358–443 (KKITTGKLNE…PIRFTYVKNK (86 aa)) form the KH-like domain.

Belongs to the TRAFAC class TrmE-Era-EngA-EngB-Septin-like GTPase superfamily. EngA (Der) GTPase family. Associates with the 50S ribosomal subunit.

In terms of biological role, GTPase that plays an essential role in the late steps of ribosome biogenesis. The chain is GTPase Der from Rickettsia typhi (strain ATCC VR-144 / Wilmington).